The primary structure comprises 192 residues: Actin, muscle (192 aa).

It belongs to the actin family.

The protein resides in the cytoplasm. Its subcellular location is the cytoskeleton. It catalyses the reaction ATP + H2O = ADP + phosphate + H(+). Actins are highly conserved proteins that are involved in various types of cell motility and are ubiquitously expressed in all eukaryotic cells. The protein is Actin, muscle of Chionoecetes opilio (Atlantic snow crab).